Reading from the N-terminus, the 262-residue chain is Ribosomal RNA small subunit methyltransferase A (262 aa).

S-adenosyl-L-methionine contacts are provided by Asn12, Leu14, Gly38, Glu60, Asp83, and Asn102.

It belongs to the class I-like SAM-binding methyltransferase superfamily. rRNA adenine N(6)-methyltransferase family. RsmA subfamily.

It localises to the cytoplasm. It carries out the reaction adenosine(1518)/adenosine(1519) in 16S rRNA + 4 S-adenosyl-L-methionine = N(6)-dimethyladenosine(1518)/N(6)-dimethyladenosine(1519) in 16S rRNA + 4 S-adenosyl-L-homocysteine + 4 H(+). In terms of biological role, specifically dimethylates two adjacent adenosines (A1518 and A1519) in the loop of a conserved hairpin near the 3'-end of 16S rRNA in the 30S particle. May play a critical role in biogenesis of 30S subunits. The sequence is that of Ribosomal RNA small subunit methyltransferase A from Pelagibacter ubique (strain HTCC1062).